Here is a 353-residue protein sequence, read N- to C-terminus: Stomatin-like protein 2, mitochondrial (353 aa).

The N-terminal 28 residues, 1–28, are a transit peptide targeting the mitochondrion; the sequence is MLARAARGTGALLLRGSVQASGRIPRRA. Ser-17 carries the phosphoserine; by PKC/PRKCZ modification. A Phosphotyrosine modification is found at Tyr-124. Lys-145 is modified (N6-acetyllysine; alternate). An N6-succinyllysine; alternate modification is found at Lys-145. Residues 215 to 252 are a coiled coil; sequence INVAEGKKQAQILASEAEKAEQINQAAGEASAVLAKAK. Position 233 is an N6-acetyllysine (Lys-233). The tract at residues 324–353 is disordered; sequence VPGAQNSSEARRDVQTTDTSIEELGRVKLS. Ser-330 carries the post-translational modification Phosphoserine.

Belongs to the band 7/mec-2 family. As to quaternary structure, forms homooligomers. Interacts with MFN2; may form heterooligomers. Interacts with PHB1 and PHB2; recruits them to cardiolipin-enriched mitochondrial membranes and stabilizes them. Interacts with CACNA2D2.

It localises to the cell membrane. The protein localises to the mitochondrion. The protein resides in the mitochondrion inner membrane. It is found in the mitochondrion intermembrane space. Its subcellular location is the membrane raft. It localises to the cytoplasm. The protein localises to the cytoskeleton. Mitochondrial protein that probably regulates the biogenesis and the activity of mitochondria. Stimulates cardiolipin biosynthesis, binds cardiolipin-enriched membranes where it recruits and stabilizes some proteins including prohibitin and may therefore act in the organization of functional microdomains in mitochondrial membranes. Through regulation of the mitochondrial function may play a role into several biological processes including cell migration, cell proliferation, T-cell activation, calcium homeostasis and cellular response to stress. May play a role in calcium homeostasis through negative regulation of calcium efflux from mitochondria. Required for mitochondrial hyperfusion a pro-survival cellular response to stress which results in increased ATP production by mitochondria. May also regulate the organization of functional domains at the plasma membrane and play a role in T-cell activation through association with the T-cell receptor signaling complex and its regulation. In Rattus norvegicus (Rat), this protein is Stomatin-like protein 2, mitochondrial (Stoml2).